The primary structure comprises 360 residues: Threonine synthase (360 aa).

The residue at position 69 (K69) is an N6-(pyridoxal phosphate)lysine. Pyridoxal 5'-phosphate-binding positions include N95, 196–200 (GNAGN), and T326.

It belongs to the threonine synthase family. As to quaternary structure, homodimer. The cofactor is pyridoxal 5'-phosphate.

It catalyses the reaction O-phospho-L-homoserine + H2O = L-threonine + phosphate. Its pathway is amino-acid biosynthesis; L-threonine biosynthesis; L-threonine from L-aspartate: step 5/5. In terms of biological role, catalyzes the gamma-elimination of phosphate from L-phosphohomoserine and the beta-addition of water to produce L-threonine. The polypeptide is Threonine synthase (thrC) (Mycobacterium leprae (strain TN)).